Reading from the N-terminus, the 96-residue chain is Small ribosomal subunit protein bS18 (96 aa).

It belongs to the bacterial ribosomal protein bS18 family. In terms of assembly, part of the 30S ribosomal subunit. Forms a tight heterodimer with protein bS6.

Binds as a heterodimer with protein bS6 to the central domain of the 16S rRNA, where it helps stabilize the platform of the 30S subunit. The polypeptide is Small ribosomal subunit protein bS18 (Borreliella burgdorferi (strain ATCC 35210 / DSM 4680 / CIP 102532 / B31) (Borrelia burgdorferi)).